A 219-amino-acid polypeptide reads, in one-letter code: MFLTPREQEKLLISWAAEVARRRRVKGLKLNYAEAMAIIVDYILEKAREGVKMEDIIKGAQELLTENDVMEGVPELLDLVQVEATFPDGTKLVTVRNPIKSSKKTLNTYIIKQGEIEVKGEEIELEITNTGDRPIQVGSHFHFFEVNKALKFDREKAYGMRLSIPAGTAVRFEPGQTKVVRLRKIGGGRRVTGLNGLTEGSLEHNKEESIKRAKERGFA.

The tract at residues methionine 1–serine 101 is urease gamma. The urease beta stretch occupies residues serine 102 to alanine 219.

It in the N-terminal section; belongs to the urease gamma subunit family. This sequence in the C-terminal section; belongs to the urease beta subunit family. In terms of assembly, heterohexamer of 3 UreC (alpha) and 3 UreAB (gamma/beta) subunits.

It is found in the cytoplasm. The enzyme catalyses urea + 2 H2O + H(+) = hydrogencarbonate + 2 NH4(+). The protein operates within nitrogen metabolism; urea degradation; CO(2) and NH(3) from urea (urease route): step 1/1. The sequence is that of Urease subunit gamma/beta from Sulfurisphaera tokodaii (strain DSM 16993 / JCM 10545 / NBRC 100140 / 7) (Sulfolobus tokodaii).